We begin with the raw amino-acid sequence, 147 residues long: Large ribosomal subunit protein bL9 (147 aa).

This sequence belongs to the bacterial ribosomal protein bL9 family.

In terms of biological role, binds to the 23S rRNA. This is Large ribosomal subunit protein bL9 from Cytophaga hutchinsonii (strain ATCC 33406 / DSM 1761 / CIP 103989 / NBRC 15051 / NCIMB 9469 / D465).